Consider the following 359-residue polypeptide: Peptide chain release factor 1 (359 aa).

An N5-methylglutamine modification is found at Gln-235.

Belongs to the prokaryotic/mitochondrial release factor family. In terms of processing, methylated by PrmC. Methylation increases the termination efficiency of RF1.

It is found in the cytoplasm. Its function is as follows. Peptide chain release factor 1 directs the termination of translation in response to the peptide chain termination codons UAG and UAA. This is Peptide chain release factor 1 from Chelativorans sp. (strain BNC1).